Here is an 889-residue protein sequence, read N- to C-terminus: Translation initiation factor IF-2 (889 aa).

The tract at residues 1–299 is disordered; the sequence is MTDNKDDKTL…EKFKRSQMQE (299 aa). Residues 61–76 are compositionally biased toward low complexity; it reads ITPVAATPAARPAEQR. Residues 77 to 93 show a composition bias toward pro residues; the sequence is PMPPQPSGRPAPQPQPH. The span at 116 to 182 shows a compositional bias: basic and acidic residues; it reads MEARRRALAE…EAEKTEEKVE (67 aa). Positions 196-215 are enriched in low complexity; the sequence is RPQPGRAAPAATPAAPDGAA. A compositionally biased stretch (basic and acidic residues) spans 220 to 231; it reads RGTESEEDERRR. Positions 387 to 554 constitute a tr-type G domain; it reads SRPPIVTIMG…AILLQSEILD (168 aa). The interval 396 to 403 is G1; sequence GHVDHGKT. 396–403 contributes to the GTP binding site; the sequence is GHVDHGKT. Residues 421–425 are G2; that stretch reads GITQH. The interval 442–445 is G3; it reads DTPG. GTP contacts are provided by residues 442-446 and 496-499; these read DTPGH and NKID. The tract at residues 496 to 499 is G4; it reads NKID. Residues 532–534 are G5; sequence SAK.

Belongs to the TRAFAC class translation factor GTPase superfamily. Classic translation factor GTPase family. IF-2 subfamily.

The protein localises to the cytoplasm. Functionally, one of the essential components for the initiation of protein synthesis. Protects formylmethionyl-tRNA from spontaneous hydrolysis and promotes its binding to the 30S ribosomal subunits. Also involved in the hydrolysis of GTP during the formation of the 70S ribosomal complex. This is Translation initiation factor IF-2 from Rhizobium meliloti (strain 1021) (Ensifer meliloti).